We begin with the raw amino-acid sequence, 233 residues long: Ribulose-phosphate 3-epimerase (233 aa).

Ser16 is a substrate binding site. His41, Asp43, and His74 together coordinate a divalent metal cation. Asp43 acts as the Proton acceptor in catalysis. Substrate-binding positions include His74, 150–153 (GFCG), 185–187 (DGG), and 207–208 (AS). Position 185 (Asp185) interacts with a divalent metal cation. The active-site Proton donor is Asp185.

Belongs to the ribulose-phosphate 3-epimerase family. Requires a divalent metal cation as cofactor.

The catalysed reaction is D-ribulose 5-phosphate = D-xylulose 5-phosphate. It participates in carbohydrate degradation. In terms of biological role, catalyzes the reversible epimerization of D-ribulose 5-phosphate to D-xylulose 5-phosphate. This chain is Ribulose-phosphate 3-epimerase, found in Chlamydia trachomatis serovar D (strain ATCC VR-885 / DSM 19411 / UW-3/Cx).